The following is a 198-amino-acid chain: Recombination protein RecR (198 aa).

Residues 57–72 form a C4-type zinc finger; the sequence is CQRCNTFSEAELCAIC. Residues 80–175 form the Toprim domain; the sequence is DQLCIVEMPA…TVTRIARGMP (96 aa).

The protein belongs to the RecR family.

May play a role in DNA repair. It seems to be involved in an RecBC-independent recombinational process of DNA repair. It may act with RecF and RecO. In Chromobacterium violaceum (strain ATCC 12472 / DSM 30191 / JCM 1249 / CCUG 213 / NBRC 12614 / NCIMB 9131 / NCTC 9757 / MK), this protein is Recombination protein RecR.